The primary structure comprises 623 residues: UvrABC system protein C (623 aa).

The GIY-YIG domain maps to 27 to 105 (GSPGVYRMLD…IKQLKPRYNV (79 aa)). Residues 215-250 (TKVQANLAEQMQAASEAMEFERAAALRDRIKALTQV) enclose the UVR domain.

Belongs to the UvrC family. As to quaternary structure, interacts with UvrB in an incision complex.

It localises to the cytoplasm. Its function is as follows. The UvrABC repair system catalyzes the recognition and processing of DNA lesions. UvrC both incises the 5' and 3' sides of the lesion. The N-terminal half is responsible for the 3' incision and the C-terminal half is responsible for the 5' incision. This Cereibacter sphaeroides (strain ATCC 17023 / DSM 158 / JCM 6121 / CCUG 31486 / LMG 2827 / NBRC 12203 / NCIMB 8253 / ATH 2.4.1.) (Rhodobacter sphaeroides) protein is UvrABC system protein C.